The sequence spans 612 residues: Oligopeptide transport ATP-binding protein OppD (612 aa).

The 251-residue stretch at 5–255 (LEVTDLAVTF…RRMPYTVGLL (251 aa)) folds into the ABC transporter 1 domain. Positions 43, 44, 45, 46, 47, 48, 49, 61, 96, 147, 158, 159, and 213 each coordinate ATP. Residues Cys-286, Cys-292, Cys-299, and Cys-317 each coordinate [4Fe-4S] cluster. The 251-residue stretch at 350–600 (VRVRHLVKTY…PKHEYTRRLL (251 aa)) folds into the ABC transporter 2 domain. Positions 396, 397, 398, 399, 400, 401, 402, 445, 495, 499, 503, and 558 each coordinate ATP.

Belongs to the ABC transporter superfamily. As to quaternary structure, the complex is composed of an ATP-binding protein (OppD), two transmembrane proteins (OppB and OppC) and a solute-binding protein (OppA).

It localises to the cell inner membrane. It catalyses the reaction a [peptide](out) + ATP + H2O = a [peptide](in) + ADP + phosphate + H(+). Part of the ABC transporter complex OppABCD involved in the uptake of oligopeptides. Responsible for energy coupling to the transport system. In Mycobacterium bovis (strain ATCC BAA-935 / AF2122/97), this protein is Oligopeptide transport ATP-binding protein OppD.